We begin with the raw amino-acid sequence, 347 residues long: Homeobox protein knotted-1-like 9 (347 aa).

Residues 1–17 are compositionally biased toward low complexity; it reads MESFASLAGGGSSSTTA. 3 disordered regions span residues 1–36, 122–145, and 179–206; these read MESFASLAGGGSSSTTARLPELIPPENPDRISPPPL, QQLDAADGHPRRRHEPRRDDDVPD, and DSNCEGTGSSEEEQDTSCPEAEEIDPSD. Pro residues predominate over residues 22-36; the sequence is LIPPENPDRISPPPL. Over residues 188–203 the composition is skewed to acidic residues; that stretch reads SEEEQDTSCPEAEEID. One can recognise an ELK domain in the interval 208–228; the sequence is QLKHQLLMKYGGSLGDLRQAF. A DNA-binding region (homeobox; TALE-type) is located at residues 229 to 293; sequence SKRTKKGKLP…NQRKRHWKPT (65 aa).

Belongs to the TALE/KNOX homeobox family.

The protein localises to the nucleus. The sequence is that of Homeobox protein knotted-1-like 9 from Oryza sativa subsp. japonica (Rice).